The primary structure comprises 96 residues: Copper-sensing transcriptional repressor RicR (96 aa).

The residue at position 2 (threonine 2) is an N-acetylthreonine. Cu cation contacts are provided by cysteine 38, histidine 63, and cysteine 67.

The protein belongs to the CsoR family.

The protein resides in the cytoplasm. Functionally, under low copper conditions, represses the expression of lpqS, Rv2963, mymT, socA, socB, mmcO and its own expression. In the presence of copper, RicR dissociates from DNA, leading to the expression of the target genes. Members of the RicR regulon are important for copper resistance during infections and full virulence in a mouse model of infection. The protein is Copper-sensing transcriptional repressor RicR of Mycobacterium tuberculosis (strain ATCC 25618 / H37Rv).